Here is a 213-residue protein sequence, read N- to C-terminus: Kynurenine formamidase (213 aa).

W20 lines the substrate pocket. Zn(2+)-binding residues include H50, H54, and D56. H60 functions as the Proton donor/acceptor in the catalytic mechanism. H161 and E173 together coordinate Zn(2+).

It belongs to the Cyclase 1 superfamily. KynB family. Homodimer. Zn(2+) serves as cofactor.

The enzyme catalyses N-formyl-L-kynurenine + H2O = L-kynurenine + formate + H(+). Its pathway is amino-acid degradation; L-tryptophan degradation via kynurenine pathway; L-kynurenine from L-tryptophan: step 2/2. In terms of biological role, catalyzes the hydrolysis of N-formyl-L-kynurenine to L-kynurenine, the second step in the kynurenine pathway of tryptophan degradation. This chain is Kynurenine formamidase, found in Pseudomonas paraeruginosa (strain DSM 24068 / PA7) (Pseudomonas aeruginosa (strain PA7)).